The sequence spans 217 residues: Ribonuclease HII (217 aa).

The RNase H type-2 domain maps to 12-201 (DLVAGVDEVG…VRTAHEARAA (190 aa)). A divalent metal cation is bound by residues aspartate 18, glutamate 19, and aspartate 110.

It belongs to the RNase HII family. It depends on Mn(2+) as a cofactor. Mg(2+) serves as cofactor.

The protein localises to the cytoplasm. It catalyses the reaction Endonucleolytic cleavage to 5'-phosphomonoester.. Its function is as follows. Endonuclease that specifically degrades the RNA of RNA-DNA hybrids. The chain is Ribonuclease HII from Pseudomonas syringae pv. tomato (strain ATCC BAA-871 / DC3000).